The chain runs to 736 residues: Protein DSF2 (736 aa).

A compositionally biased stretch (polar residues) spans 1–10; that stretch reads MNQNLKNTSW. Disordered stretches follow at residues 1–46, 178–208, 229–410, and 440–461; these read MNQN…DSQF, SGMK…SPNP, ISDN…SGEN, and FKTA…ARPN. Basic and acidic residues predominate over residues 14–24; the sequence is IGSDDQERKAN. Composition is skewed to polar residues over residues 25–46 and 197–208; these read SSEV…DSQF and ENGNRSTNSPNP. A compositionally biased stretch (low complexity) spans 238 to 256; the sequence is NNANSKNNRTTSNNINTST. Polar residues predominate over residues 264-284; the sequence is KQSCPNEFTTTQKSNCLYRNG. 3 stretches are compositionally biased toward low complexity: residues 285–294, 303–318, and 335–350; these read SSTSTNTSFS, KTQS…FSKL, and SNSS…TMTN. Basic residues predominate over residues 374–385; that stretch reads KLFKSPRTRAKN. Residues 392-410 are compositionally biased toward polar residues; it reads EGSSPIRSATNSLDFSGEN.

This Saccharomyces cerevisiae (strain ATCC 204508 / S288c) (Baker's yeast) protein is Protein DSF2 (DSF2).